The sequence spans 396 residues: Acetate kinase (396 aa).

Asn6 serves as a coordination point for Mg(2+). Lys13 contacts ATP. A substrate-binding site is contributed by Arg89. The Proton donor/acceptor role is filled by Asp145. Residues His205–Gly209, Asp280–Arg282, and Gly329–Asn333 contribute to the ATP site. Mg(2+) is bound at residue Glu383.

The protein belongs to the acetokinase family. Homodimer. The cofactor is Mg(2+). Requires Mn(2+) as cofactor.

The protein resides in the cytoplasm. It carries out the reaction acetate + ATP = acetyl phosphate + ADP. It participates in metabolic intermediate biosynthesis; acetyl-CoA biosynthesis; acetyl-CoA from acetate: step 1/2. Its function is as follows. Catalyzes the formation of acetyl phosphate from acetate and ATP. Can also catalyze the reverse reaction. The polypeptide is Acetate kinase (Mesoplasma florum (strain ATCC 33453 / NBRC 100688 / NCTC 11704 / L1) (Acholeplasma florum)).